Reading from the N-terminus, the 106-residue chain is Thioredoxin (106 aa).

One can recognise a Thioredoxin domain in the interval 2–106 (VNFLKTKADF…GLREKIKKNK (105 aa)). Active-site nucleophile residues include cysteine 32 and cysteine 35. Cysteine 32 and cysteine 35 are oxidised to a cystine.

The protein belongs to the thioredoxin family.

It localises to the cytoplasm. Its function is as follows. Participates in various redox reactions through the reversible oxidation of its active center dithiol to a disulfide and catalyzes dithiol-disulfide exchange reactions. This chain is Thioredoxin (THIO), found in Geodia cydonium (Sponge).